The primary structure comprises 811 residues: Potassium transporter 7 (811 aa).

Over 1–52 (MPSYQYLLSLLFYILDCTDRFSVIVTIHNHRVGVLMIVLLQDQWKSYCRTIS) the chain is Cytoplasmic. A helical transmembrane segment spans residues 53-73 (LLAFQSFGVVYGDLSTSPLYV). Over 74-93 (YKSAFSGRLNNYRDETTIFG) the chain is Extracellular. Residues 94-114 (LFSLIFWTLTLLPLLKYVIIV) form a helical membrane-spanning segment. Over 115-181 (LNADDNGEGG…EKHRKLRTCL (67 aa)) the chain is Cytoplasmic. The helical transmembrane segment at 182-202 (LLFVLFGACMVIGDGVFTPAI) threads the bilayer. Over 203-217 (SVLSAISGLKDPGPG) the chain is Extracellular. Residues 218–238 (GIPDGWVVFIACIVLVGLFAL) traverse the membrane as a helical segment. The Cytoplasmic segment spans residues 239–245 (QHRGTHR). Residues 246 to 266 (VAFMFAPIVVVWLLSIGVIGL) traverse the membrane as a helical segment. Residues 267-296 (YNIIHWNHRIFLALSPHYVIKFFKMTGKDG) are Extracellular-facing. Residues 297-317 (WLSLGGVLLAITGTEAMFADL) form a helical membrane-spanning segment. At 318 to 326 (GHFTAASIR) the chain is on the cytoplasmic side. Residues 327–347 (LAFVGAIYPCLVLQYMGQAAF) form a helical membrane-spanning segment. At 348–366 (LSRNMSAVEDSFYQSVPRS) the chain is on the extracellular side. Residue Asn-351 is glycosylated (N-linked (GlcNAc...) asparagine). A helical membrane pass occupies residues 367–387 (LFWPVFVIATLAAVVGSQSII). The Cytoplasmic segment spans residues 388 to 418 (SATFSIVKQCLSLGCFPRVKVVHTSRWIHGQ). Residues 419–439 (IYIPEINWILMVLCLAVTLGF) traverse the membrane as a helical segment. The Extracellular segment spans residues 440–450 (RDTTVIGNAYG). The chain crosses the membrane as a helical span at residues 451-471 (LACIVVMFVTTWLMALVIIFV). At 472–475 (WQKN) the chain is on the cytoplasmic side. A helical membrane pass occupies residues 476-496 (ILLALLFVVAFGSIEVVYLSA). At 497–503 (AVTKVPQ) the chain is on the extracellular side. A helical membrane pass occupies residues 504 to 524 (GGWAPIVFAFVFMLVMYVWHY). Residues 525–811 (GSRRKYLFDL…LVEVGMIYYV (287 aa)) lie on the Cytoplasmic side of the membrane. The interval 680–702 (TGLVMRDSNNEASGTSLTRSSRS) is disordered.

Belongs to the HAK/KUP transporter (TC 2.A.72.3) family. As to expression, expressed in roots and shoots.

Its subcellular location is the membrane. Its function is as follows. High-affinity potassium transporter. This Oryza sativa subsp. japonica (Rice) protein is Potassium transporter 7 (HAK7).